We begin with the raw amino-acid sequence, 154 residues long: Superoxide dismutase [Cu-Zn] (154 aa).

Residues H47 and H64 each contribute to the Cu cation site. A disulfide bond links C58 and C147. 4 residues coordinate Zn(2+): H64, H72, H81, and D84. Residue H121 coordinates Cu cation. R144 contributes to the substrate binding site.

The protein belongs to the Cu-Zn superoxide dismutase family. Homodimer. Cu cation is required as a cofactor. The cofactor is Zn(2+).

Its subcellular location is the cytoplasm. The catalysed reaction is 2 superoxide + 2 H(+) = H2O2 + O2. Its function is as follows. Destroys radicals which are normally produced within the cells and which are toxic to biological systems. This is Superoxide dismutase [Cu-Zn] (SOD1) from Pleurocordyceps sinensis (Polycephalomyces sinensis).